Consider the following 156-residue polypeptide: SsrA-binding protein (156 aa).

The protein belongs to the SmpB family.

The protein localises to the cytoplasm. Required for rescue of stalled ribosomes mediated by trans-translation. Binds to transfer-messenger RNA (tmRNA), required for stable association of tmRNA with ribosomes. tmRNA and SmpB together mimic tRNA shape, replacing the anticodon stem-loop with SmpB. tmRNA is encoded by the ssrA gene; the 2 termini fold to resemble tRNA(Ala) and it encodes a 'tag peptide', a short internal open reading frame. During trans-translation Ala-aminoacylated tmRNA acts like a tRNA, entering the A-site of stalled ribosomes, displacing the stalled mRNA. The ribosome then switches to translate the ORF on the tmRNA; the nascent peptide is terminated with the 'tag peptide' encoded by the tmRNA and targeted for degradation. The ribosome is freed to recommence translation, which seems to be the essential function of trans-translation. In Bacillus pumilus (strain SAFR-032), this protein is SsrA-binding protein.